A 358-amino-acid polypeptide reads, in one-letter code: Alternative oxidase, mitochondrial (358 aa).

A helical membrane pass occupies residues 152-172; sequence LIRMVFLESVAGVPGMVAGML. Positions 159, 198, and 201 each coordinate Fe cation. Residues 217-237 form a helical membrane-spanning segment; sequence FMIIGAQGVFFNSMFLSYLIS. Residues Glu-249, Glu-250, Glu-306, and His-309 each contribute to the Fe cation site.

It belongs to the alternative oxidase family. The cofactor is Fe cation.

The protein localises to the mitochondrion inner membrane. In terms of biological role, catalyzes cyanide-resistant oxygen consumption. May increase respiration when the cytochrome respiratory pathway is restricted, or in response to low temperatures. The polypeptide is Alternative oxidase, mitochondrial (Blumeria graminis (Powdery mildew)).